A 157-amino-acid polypeptide reads, in one-letter code: Cyclic pyranopterin monophosphate synthase (157 aa).

Substrate contacts are provided by residues 74 to 76 (MCH) and 112 to 113 (ME). Aspartate 127 is a catalytic residue.

The protein belongs to the MoaC family. In terms of assembly, homohexamer; trimer of dimers.

It catalyses the reaction (8S)-3',8-cyclo-7,8-dihydroguanosine 5'-triphosphate = cyclic pyranopterin phosphate + diphosphate. Its pathway is cofactor biosynthesis; molybdopterin biosynthesis. Catalyzes the conversion of (8S)-3',8-cyclo-7,8-dihydroguanosine 5'-triphosphate to cyclic pyranopterin monophosphate (cPMP). In Campylobacter lari (strain RM2100 / D67 / ATCC BAA-1060), this protein is Cyclic pyranopterin monophosphate synthase.